A 606-amino-acid polypeptide reads, in one-letter code: Limonene synthase, chloroplastic (606 aa).

A chloroplast-targeting transit peptide spans 1–38; sequence MAIINLPVPTNSSSEVNKHNHLRSCLPSGRATFTTLSA. Positions 320, 357, 361, 497, and 500 each coordinate (2E)-geranyl diphosphate. Residues aspartate 357 and aspartate 361 each contribute to the Mg(2+) site. The short motif at 357–361 is the DDXXD motif element; that stretch reads DDIYD. Mg(2+) contacts are provided by aspartate 500, threonine 504, and glutamate 508.

This sequence belongs to the terpene synthase family. Tpsb subfamily. As to quaternary structure, monomer. Mg(2+) serves as cofactor. Mn(2+) is required as a cofactor. In terms of tissue distribution, confined to fruits.

It is found in the plastid. The protein localises to the chloroplast. It catalyses the reaction (2E,6E)-farnesyl diphosphate = (E)-beta-farnesene + diphosphate. The catalysed reaction is (2E)-geranyl diphosphate = limonene + diphosphate. It carries out the reaction (2E)-geranyl diphosphate = beta-pinene + diphosphate. The enzyme catalyses (2E)-geranyl diphosphate = sabinene + diphosphate. It catalyses the reaction (2E)-geranyl diphosphate = beta-myrcene + diphosphate. The catalysed reaction is (2E)-geranyl diphosphate = alpha-pinene + diphosphate. It carries out the reaction (2E)-geranyl diphosphate = terpinolene + diphosphate. Its pathway is secondary metabolite biosynthesis; terpenoid biosynthesis. Functionally, monoterpene synthase (mono-TPS) involved in the biosynthesis of monoterpenes natural products, constituent of coffee beverage aroma. Catalyzes the conversion of (2E)-geranyl diphosphate (GPP) into limonene, beta-pinene, sabinene and beta-myrcene, and, as minor products, alpha-pinene and alpha-terpinolene. Can also, with a low efficiency, use farnesyl pyrophosphate (FPP) as substrate to produce beta-farnesene. Not able to use geranylgeranyl pyrophosphate (GGPP) as substrate. This chain is Limonene synthase, chloroplastic, found in Coffea arabica (Arabian coffee).